The following is a 170-amino-acid chain: Acetyl-CoA decarbonylase/synthase complex subunit epsilon 1 (170 aa).

The protein belongs to the CdhB family. Heterotetramer of two alpha and two epsilon subunits. The ACDS complex is made up of alpha, epsilon, beta, gamma and delta subunits with a probable stoichiometry of (alpha(2)epsilon(2))(4)-beta(8)-(gamma(1)delta(1))(8).

Its pathway is one-carbon metabolism; methanogenesis from acetate. In terms of biological role, part of a complex that catalyzes the reversible cleavage of acetyl-CoA, allowing growth on acetate as sole source of carbon and energy. The alpha-epsilon subcomponent functions as a carbon monoxide dehydrogenase. The precise role of the epsilon subunit is unclear; it may have a stabilizing role within the alpha(2)epsilon(2) component and/or be involved in electron transfer to FAD during a potential FAD-mediated CO oxidation. The sequence is that of Acetyl-CoA decarbonylase/synthase complex subunit epsilon 1 from Methanosarcina barkeri (strain Fusaro / DSM 804).